Reading from the N-terminus, the 205-residue chain is Ras-related protein Rab-1A (205 aa).

The residue at position 2 (Ser2) is an N-acetylserine. Ser20, Gly21, Gly23, Lys24, Ser25, Cys26, Glu38, and Thr43 together coordinate GTP. A Mg(2+)-binding site is contributed by Ser25. A Switch 1 motif is present at residues 34-48; the sequence is DTYTESYISTIGVDF. Thr43 contributes to the Mg(2+) binding site. Glycyl lysine isopeptide (Lys-Gly) (interchain with G-Cter in ubiquitin) cross-links involve residues Lys49 and Lys61. Asp66 contacts Mg(2+). The Switch 2 motif lies at 66–83; that stretch reads DTAGQERFRTITSSYYRG. GTP-binding residues include Gly69, Asn124, Lys125, Asp127, Ala155, and Lys156. Residues 178 to 205 are disordered; it reads PGATAGGAEKSNVKIQSTPVKQSGGGCC. Ser194 bears the Phosphoserine; by CDK1 mark. 2 S-geranylgeranyl cysteine lipidation sites follow: Cys204 and Cys205.

Belongs to the small GTPase superfamily. Rab family. In terms of assembly, may interact with YIPF5. Interacts with C9orf72; the interaction mediates recruitment of RAB1A to the ATG1/ULK1 kinase complex. Interacts with GDI1; this promotes dissociation from membranes. Mg(2+) is required as a cofactor. Phosphorylated by CDK1 kinase during mitosis. Post-translationally, ubiquitinated via 'Lys-11'-linked ubiquitination on Lys-49 and Lys-61; impairing the recruitment of guanosine diphosphate (GDP) dissociation inhibitor 1/GDI1.

The protein resides in the golgi apparatus. It is found in the endoplasmic reticulum. It localises to the early endosome. The protein localises to the cytoplasm. Its subcellular location is the cytosol. The protein resides in the membrane. It is found in the melanosome. The enzyme catalyses GTP + H2O = GDP + phosphate + H(+). With respect to regulation, regulated by guanine nucleotide exchange factors (GEFs) which promote the exchange of bound GDP for free GTP. Regulated by GTPase activating proteins (GAPs) which increase the GTP hydrolysis activity. Inhibited by GDP dissociation inhibitors (GDIs). Its function is as follows. The small GTPases Rab are key regulators of intracellular membrane trafficking, from the formation of transport vesicles to their fusion with membranes. Rabs cycle between an inactive GDP-bound form and an active GTP-bound form that is able to recruit to membranes different sets of downstream effectors directly responsible for vesicle formation, movement, tethering and fusion. RAB1A regulates vesicular protein transport from the endoplasmic reticulum (ER) to the Golgi compartment and on to the cell surface, and plays a role in IL-8 and growth hormone secretion. Required to modulate the compacted morphology of the Golgi. Regulates the level of CASR present at the cell membrane. Plays a role in cell adhesion and cell migration, via its role in protein trafficking. Plays a role in autophagosome assembly and cellular defense reactions against pathogenic bacteria. Plays a role in microtubule-dependent protein transport by early endosomes and in anterograde melanosome transport. This Sus scrofa (Pig) protein is Ras-related protein Rab-1A (RAB1A).